The chain runs to 285 residues: Release factor glutamine methyltransferase (285 aa).

Residues glycine 119–glycine 123, glutamate 142, tryptophan 175, and asparagine 191 contribute to the S-adenosyl-L-methionine site. Substrate is bound at residue asparagine 191–tyrosine 194.

It belongs to the protein N5-glutamine methyltransferase family. PrmC subfamily.

The enzyme catalyses L-glutaminyl-[peptide chain release factor] + S-adenosyl-L-methionine = N(5)-methyl-L-glutaminyl-[peptide chain release factor] + S-adenosyl-L-homocysteine + H(+). Functionally, methylates the class 1 translation termination release factors RF1/PrfA and RF2/PrfB on the glutamine residue of the universally conserved GGQ motif. The protein is Release factor glutamine methyltransferase of Burkholderia pseudomallei (strain K96243).